The primary structure comprises 460 residues: Cysteine--tRNA ligase (460 aa).

C28 is a binding site for Zn(2+). Positions 30–40 match the 'HIGH' region motif; sequence MTVYDYCHLGH. Positions 209, 234, and 238 each coordinate Zn(2+). The short motif at 266 to 270 is the 'KMSKS' region element; that stretch reads KMSKS. ATP is bound at residue K269.

The protein belongs to the class-I aminoacyl-tRNA synthetase family. Monomer. Zn(2+) serves as cofactor.

The protein localises to the cytoplasm. The catalysed reaction is tRNA(Cys) + L-cysteine + ATP = L-cysteinyl-tRNA(Cys) + AMP + diphosphate. This Pseudomonas fluorescens (strain ATCC BAA-477 / NRRL B-23932 / Pf-5) protein is Cysteine--tRNA ligase.